Here is a 398-residue protein sequence, read N- to C-terminus: Abhydrolase domain-containing protein 2 (398 aa).

The Cytoplasmic segment spans residues 1–4 (MSTA). Residues 5 to 22 (FLTLIAVIVCILFRILNV) traverse the membrane as a helical; Signal-anchor for type II membrane protein segment. The Extracellular portion of the chain corresponds to 23–398 (HSQPLKPSVW…MMHEVGKVAP (376 aa)). Residues 113 to 365 (VAICPGIANS…HGGHLGFYEG (253 aa)) enclose the AB hydrolase-1 domain. Active-site charge relay system residues include Ser192, Asp328, and His359.

This sequence belongs to the AB hydrolase superfamily. AB hydrolase 4 family.

Its subcellular location is the membrane. The sequence is that of Abhydrolase domain-containing protein 2 (Hydr2) from Drosophila melanogaster (Fruit fly).